A 188-amino-acid chain; its full sequence is Guanylate kinase (188 aa).

Residues 4-183 form the Guanylate kinase-like domain; the sequence is RNIVVLTAPS…AVEETLTRIR (180 aa). An ATP-binding site is contributed by 11–18; that stretch reads APSGAGKT.

This sequence belongs to the guanylate kinase family.

It localises to the cytoplasm. It catalyses the reaction GMP + ATP = GDP + ADP. Functionally, essential for recycling GMP and indirectly, cGMP. This chain is Guanylate kinase, found in Salinibacter ruber (strain DSM 13855 / M31).